Here is a 437-residue protein sequence, read N- to C-terminus: Nicotinate phosphoribosyltransferase (437 aa).

Residue H231 is modified to Phosphohistidine; by autocatalysis.

It belongs to the NAPRTase family. Post-translationally, transiently phosphorylated on a His residue during the reaction cycle. Phosphorylation strongly increases the affinity for substrates and increases the rate of nicotinate D-ribonucleotide production. Dephosphorylation regenerates the low-affinity form of the enzyme, leading to product release.

It carries out the reaction nicotinate + 5-phospho-alpha-D-ribose 1-diphosphate + ATP + H2O = nicotinate beta-D-ribonucleotide + ADP + phosphate + diphosphate. It functions in the pathway cofactor biosynthesis; NAD(+) biosynthesis; nicotinate D-ribonucleotide from nicotinate: step 1/1. Catalyzes the synthesis of beta-nicotinate D-ribonucleotide from nicotinate and 5-phospho-D-ribose 1-phosphate at the expense of ATP. In Vibrio vulnificus (strain CMCP6), this protein is Nicotinate phosphoribosyltransferase.